We begin with the raw amino-acid sequence, 252 residues long: Probable truncated L-gulonolactone oxidase 7, mitochondrial (252 aa).

A mitochondrion-targeting transit peptide spans 1-102; sequence MKRSMRSHLA…ELNYGVLVRY (102 aa).

Belongs to the oxygen-dependent FAD-linked oxidoreductase family.

It localises to the mitochondrion. It carries out the reaction L-gulono-1,4-lactone + O2 = L-ascorbate + H2O2 + H(+). It functions in the pathway cofactor biosynthesis; L-ascorbate biosynthesis. Functionally, may be involved in the biosynthesis of ascorbic acid. The polypeptide is Probable truncated L-gulonolactone oxidase 7, mitochondrial (Arabidopsis thaliana (Mouse-ear cress)).